The chain runs to 82 residues: Small ribosomal subunit protein bS18 (82 aa).

It belongs to the bacterial ribosomal protein bS18 family. In terms of assembly, part of the 30S ribosomal subunit. Forms a tight heterodimer with protein bS6.

Its function is as follows. Binds as a heterodimer with protein bS6 to the central domain of the 16S rRNA, where it helps stabilize the platform of the 30S subunit. This is Small ribosomal subunit protein bS18 from Bifidobacterium longum (strain NCC 2705).